Here is a 383-residue protein sequence, read N- to C-terminus: Succinyl-diaminopimelate desuccinylase (383 aa).

Histidine 74 serves as a coordination point for Zn(2+). Residue aspartate 76 is part of the active site. Aspartate 107 lines the Zn(2+) pocket. Catalysis depends on glutamate 141, which acts as the Proton acceptor. Zn(2+) is bound by residues glutamate 142, glutamate 170, and histidine 356.

It belongs to the peptidase M20A family. DapE subfamily. In terms of assembly, homodimer. Zn(2+) is required as a cofactor. Co(2+) serves as cofactor.

The enzyme catalyses N-succinyl-(2S,6S)-2,6-diaminopimelate + H2O = (2S,6S)-2,6-diaminopimelate + succinate. Its pathway is amino-acid biosynthesis; L-lysine biosynthesis via DAP pathway; LL-2,6-diaminopimelate from (S)-tetrahydrodipicolinate (succinylase route): step 3/3. Catalyzes the hydrolysis of N-succinyl-L,L-diaminopimelic acid (SDAP), forming succinate and LL-2,6-diaminopimelate (DAP), an intermediate involved in the bacterial biosynthesis of lysine and meso-diaminopimelic acid, an essential component of bacterial cell walls. The protein is Succinyl-diaminopimelate desuccinylase of Cupriavidus pinatubonensis (strain JMP 134 / LMG 1197) (Cupriavidus necator (strain JMP 134)).